Here is a 607-residue protein sequence, read N- to C-terminus: Elongation factor 4 (607 aa).

Residues 11-193 (EKIRNFSIIA…QIVEKVPAPT (183 aa)) form the tr-type G domain. GTP contacts are provided by residues 23-28 (DHGKST) and 140-143 (NKID).

It belongs to the TRAFAC class translation factor GTPase superfamily. Classic translation factor GTPase family. LepA subfamily.

It is found in the cell membrane. The enzyme catalyses GTP + H2O = GDP + phosphate + H(+). In terms of biological role, required for accurate and efficient protein synthesis under certain stress conditions. May act as a fidelity factor of the translation reaction, by catalyzing a one-codon backward translocation of tRNAs on improperly translocated ribosomes. Back-translocation proceeds from a post-translocation (POST) complex to a pre-translocation (PRE) complex, thus giving elongation factor G a second chance to translocate the tRNAs correctly. Binds to ribosomes in a GTP-dependent manner. This is Elongation factor 4 from Streptococcus pneumoniae (strain Hungary19A-6).